Consider the following 267-residue polypeptide: uncharacterized protein (267 aa).

Residues Leu2–Gly198 enclose the ABC transporter domain. Gly3–Thr10 contributes to the ATP binding site.

The protein belongs to the ABC transporter superfamily.

This is an uncharacterized protein from Alkalihalophilus pseudofirmus (strain ATCC BAA-2126 / JCM 17055 / OF4) (Bacillus pseudofirmus).